We begin with the raw amino-acid sequence, 184 residues long: MTAENRGFCQLICHINVRIGWTIFGIVFGISAILTYAIKFHNWSATATTAIATLFACETLYLYWALKKNTIVNWKSSTFQLMIWPNVFIGLLGLLGCLVCYIIAGITHQGAGSIQGWSLFKCSIYFSKFAAMYGENLWFTGSWSLVITKWTWQNAFFARKYLNKIGTASEDGDIDDDDVEVIKS.

The chain crosses the membrane as a helical span at residues 19 to 39 (IGWTIFGIVFGISAILTYAIK). N42 is a glycosylation site (N-linked (GlcNAc...) asparagine). 3 helical membrane-spanning segments follow: residues 46–66 (TATT…YWAL), 87–107 (VFIG…AGIT), and 124–146 (IYFS…WSLV).

It belongs to the HRG family.

It localises to the cell membrane. In terms of biological role, heme transporter that mediates heme uptake across the plasma membrane. The sequence is that of Heme transporter hrg-4 from Caenorhabditis elegans.